Reading from the N-terminus, the 155-residue chain is Ribosomal RNA large subunit methyltransferase H (155 aa).

S-adenosyl-L-methionine-binding positions include leucine 73, glycine 104, and 123 to 128 (LSPLTL).

Belongs to the RNA methyltransferase RlmH family. As to quaternary structure, homodimer.

The protein localises to the cytoplasm. It catalyses the reaction pseudouridine(1915) in 23S rRNA + S-adenosyl-L-methionine = N(3)-methylpseudouridine(1915) in 23S rRNA + S-adenosyl-L-homocysteine + H(+). Specifically methylates the pseudouridine at position 1915 (m3Psi1915) in 23S rRNA. The protein is Ribosomal RNA large subunit methyltransferase H of Pseudomonas fluorescens (strain ATCC BAA-477 / NRRL B-23932 / Pf-5).